We begin with the raw amino-acid sequence, 168 residues long: UPF0303 protein YE1367 (168 aa).

It belongs to the UPF0303 family.

This chain is UPF0303 protein YE1367, found in Yersinia enterocolitica serotype O:8 / biotype 1B (strain NCTC 13174 / 8081).